The chain runs to 627 residues: uncharacterized protein (627 aa).

Residues 1 to 20 (MAKFKKDLTTKNKDTDRLSE) show a composition bias toward basic and acidic residues. 2 disordered regions span residues 1 to 22 (MAKFKKDLTTKNKDTDRLSEEI) and 578 to 606 (LSLGSEEEQGQEETEASIQNAGDKKLLPV). A compositionally biased stretch (acidic residues) spans 582 to 592 (SEEEQGQEETE).

This is an uncharacterized protein from Rickettsia prowazekii (strain Madrid E).